The sequence spans 271 residues: Phosphate import ATP-binding protein PstB 2 (271 aa).

The ABC transporter domain maps to 25–266 (MATEDLHVYY…PQEKQTEDYI (242 aa)). 57-64 (GPSGCGKS) is a binding site for ATP.

The protein belongs to the ABC transporter superfamily. Phosphate importer (TC 3.A.1.7) family. The complex is composed of two ATP-binding proteins (PstB), two transmembrane proteins (PstC and PstA) and a solute-binding protein (PstS).

The protein localises to the cell membrane. The catalysed reaction is phosphate(out) + ATP + H2O = ADP + 2 phosphate(in) + H(+). In terms of biological role, part of the ABC transporter complex PstSACB involved in phosphate import. Responsible for energy coupling to the transport system. The sequence is that of Phosphate import ATP-binding protein PstB 2 from Listeria monocytogenes serovar 1/2a (strain ATCC BAA-679 / EGD-e).